We begin with the raw amino-acid sequence, 176 residues long: Inorganic pyrophosphatase (176 aa).

K30, R44, and Y56 together coordinate substrate. Mg(2+) contacts are provided by D66, D71, and D103. Substrate is bound at residue Y142.

Belongs to the PPase family. Homohexamer. Mg(2+) is required as a cofactor.

Its subcellular location is the cytoplasm. The enzyme catalyses diphosphate + H2O = 2 phosphate + H(+). Catalyzes the hydrolysis of inorganic pyrophosphate (PPi) forming two phosphate ions. This chain is Inorganic pyrophosphatase, found in Escherichia coli O6:H1 (strain CFT073 / ATCC 700928 / UPEC).